We begin with the raw amino-acid sequence, 230 residues long: CRP-like protein Clp (230 aa).

An a nucleoside 3',5'-cyclic phosphate-binding site is contributed by 18 to 139 (PSLTLDAGTI…APRILYAIGV (122 aa)). The region spanning 158–230 (LDVTDRIVRT…GKTVVLYGTR (73 aa)) is the HTH crp-type domain. Positions 190–209 (RQELARLVGCSREMAGRVLK) form a DNA-binding region, H-T-H motif.

In terms of assembly, homodimer.

The protein resides in the cytoplasm. With respect to regulation, allosterically inhibited by cyclic di-GMP (c-di-GMP), which binds to Clp and abolishes its ability to bind its target gene promoter. Its function is as follows. Global transcriptional regulator that regulates virulence factors production by activating or repressing the expression of a large set of genes in diffusible signal factor (DSF) pathway. This is CRP-like protein Clp (clp) from Xanthomonas campestris pv. campestris (strain 8004).